The chain runs to 329 residues: Legumin type B (329 aa).

Disordered stretches follow at residues 47–79 and 97–149; these read PETQ…EDGN and EEDT…GRNG. The span at 99–112 shows a compositional bias: basic and acidic residues; it reads DTAKRLRSPRDKRN. Residues 129-138 are compositionally biased toward acidic residues; sequence QQEEEEEEEE. Positions 161–308 constitute a Cupin type-1 domain; it reads ENIAQPARAD…AFGLRQRQVT (148 aa).

It belongs to the 11S seed storage protein (globulins) family. Hexamer; each subunit is composed of an acidic and a basic chain derived from a single precursor and linked by a disulfide bond.

Its function is as follows. This protein found in the seeds of many leguminous and non-leguminous plants is the source of sulfur-containing amino acids in seed meals. In Vicia faba (Broad bean), this protein is Legumin type B (LEB6).